Reading from the N-terminus, the 315-residue chain is Ribosomal RNA small subunit methyltransferase H (315 aa).

S-adenosyl-L-methionine is bound by residues Gly37 to His39, Asp57, Phe83, Asp105, and Gln112.

The protein belongs to the methyltransferase superfamily. RsmH family.

The protein localises to the cytoplasm. It catalyses the reaction cytidine(1402) in 16S rRNA + S-adenosyl-L-methionine = N(4)-methylcytidine(1402) in 16S rRNA + S-adenosyl-L-homocysteine + H(+). In terms of biological role, specifically methylates the N4 position of cytidine in position 1402 (C1402) of 16S rRNA. The protein is Ribosomal RNA small subunit methyltransferase H of Pseudomonas entomophila (strain L48).